A 382-amino-acid chain; its full sequence is Alanine racemase 1 (382 aa).

The active-site Proton acceptor; specific for D-alanine is the Lys-39. Lys-39 is subject to N6-(pyridoxal phosphate)lysine. Arg-138 is a substrate binding site. Tyr-265 (proton acceptor; specific for L-alanine) is an active-site residue. Position 312 (Met-312) interacts with substrate.

The protein belongs to the alanine racemase family. Pyridoxal 5'-phosphate is required as a cofactor.

It catalyses the reaction L-alanine = D-alanine. It functions in the pathway amino-acid biosynthesis; D-alanine biosynthesis; D-alanine from L-alanine: step 1/1. Catalyzes the interconversion of L-alanine and D-alanine. May also act on other amino acids. In Staphylococcus aureus (strain N315), this protein is Alanine racemase 1 (alr1).